We begin with the raw amino-acid sequence, 410 residues long: Neuroserpin (410 aa).

A signal peptide spans 1–16 (MAFLGLFSLLVLQSMA). 3 N-linked (GlcNAc...) asparagine glycosylation sites follow: Asn-157, Asn-321, and Asn-401. Ser-403 is a glycosylation site (O-linked (Xyl...) (chondroitin sulfate) serine).

This sequence belongs to the serpin family. As to quaternary structure, monomer. Has a tendency to form large polymers already at 41 and 45 degrees Celsius (in vitro). Detected in brain cortex and hippocampus pyramidal neurons (at protein level). Detected in cerebrospinal fluid (at protein level). Predominantly expressed in the brain.

The protein resides in the secreted. It is found in the cytoplasmic vesicle. The protein localises to the secretory vesicle lumen. It localises to the perikaryon. Its function is as follows. Serine protease inhibitor that inhibits plasminogen activators and plasmin but not thrombin. May be involved in the formation or reorganization of synaptic connections as well as for synaptic plasticity in the adult nervous system. May protect neurons from cell damage by tissue-type plasminogen activator. The polypeptide is Neuroserpin (SERPINI1) (Homo sapiens (Human)).